The sequence spans 306 residues: tRNA dimethylallyltransferase (306 aa).

11-18 (APTAAGKT) contributes to the ATP binding site. Position 13 to 18 (13 to 18 (TAAGKT)) interacts with substrate.

Belongs to the IPP transferase family. As to quaternary structure, monomer. Mg(2+) is required as a cofactor.

The catalysed reaction is adenosine(37) in tRNA + dimethylallyl diphosphate = N(6)-dimethylallyladenosine(37) in tRNA + diphosphate. In terms of biological role, catalyzes the transfer of a dimethylallyl group onto the adenine at position 37 in tRNAs that read codons beginning with uridine, leading to the formation of N6-(dimethylallyl)adenosine (i(6)A). The polypeptide is tRNA dimethylallyltransferase (Deinococcus radiodurans (strain ATCC 13939 / DSM 20539 / JCM 16871 / CCUG 27074 / LMG 4051 / NBRC 15346 / NCIMB 9279 / VKM B-1422 / R1)).